A 1044-amino-acid polypeptide reads, in one-letter code: Elongation factor 3B (1044 aa).

Ser-2 carries the N-acetylserine modification. Residues 5–42 (QQSITVLEELFRKLETATSETREGISSELSSFLNGNII) form an HEAT 1 repeat. 3 residues coordinate ADP: Ile-42, His-44, and Ser-83. 6 HEAT repeats span residues 86 to 123 (PYIVATVPSVCSKAGSKDNDVQLAATKALKAIASAVNP), 124 to 162 (VAVKALLPHLIHSLETSNKWKEKVAVLEVISVLVDAAKE), 166 to 203 (LRMPELIPVLSESMWDTKKGVKEAATTTITKATETVDN), 205 to 241 (DIERFIPKLIECIANPNEVPETVHLLGATTFVAEVTP), 242 to 279 (ATLSIMVPLLSRGLAERETSIKRKAAVIIDNMCKLVED), and 285 to 323 (PFLGKLLPGLKNNFATIADPEAREVTLKALKTLRRVGNV). 2 positions are modified to N6,N6,N6-trimethyllysine: Lys-187 and Lys-196. 3 residues coordinate ADP: Thr-392, His-396, and Glu-397. ABC transporter domains follow at residues 426-641 (DEGE…YYEL) and 667-993 (VKVS…KKEE). Asn-703 provides a ligand contact to ADP. Lys-789 bears the N6,N6,N6-trimethyllysine mark. Residues Glu-922, Asn-925, and His-951 each coordinate ADP. Thr-972 carries the post-translational modification Phosphothreonine. Ser-974 bears the Phosphoserine mark. The disordered stretch occupies residues 975 to 1044 (GHNWVAGQGA…DEYVSSDEDF (70 aa)). Residues 987–999 (RIEKKEEEGDKFD) show a composition bias toward basic and acidic residues. A compositionally biased stretch (basic residues) spans 1020 to 1031 (RKKKKERMKKKK). 2 positions are modified to phosphoserine: Ser-1039 and Ser-1040.

It belongs to the ABC transporter superfamily. ABCF family. EF3 subfamily. In terms of assembly, monomer.

It localises to the cytoplasm. It carries out the reaction ATP + H2O = ADP + phosphate + H(+). Its pathway is protein biosynthesis; polypeptide chain elongation. Ribosome-dependent ATPase that promotes the translation of proteins required for detoxification of reactive oxygen species. Required for the ATP-dependent release of deacylated tRNA from the ribosomal E-site during protein biosynthesis. Stimulates the eEF1A-dependent binding of aminoacyl-tRNA to the ribosomal A-site, which has reduced affinity for tRNA as long as the E-site is occupied. Assists translation termination by stimulating the release of nascent protein from the ribosome by release factors. The chain is Elongation factor 3B from Saccharomyces cerevisiae (strain ATCC 204508 / S288c) (Baker's yeast).